The sequence spans 301 residues: Glycine--tRNA ligase alpha subunit (301 aa).

The protein belongs to the class-II aminoacyl-tRNA synthetase family. As to quaternary structure, tetramer of two alpha and two beta subunits.

Its subcellular location is the cytoplasm. It carries out the reaction tRNA(Gly) + glycine + ATP = glycyl-tRNA(Gly) + AMP + diphosphate. This Polaromonas sp. (strain JS666 / ATCC BAA-500) protein is Glycine--tRNA ligase alpha subunit.